Consider the following 229-residue polypeptide: Potassium/proton antiporter CemA (229 aa).

4 consecutive transmembrane segments (helical) span residues 7 to 27 (FTPL…SLSF), 114 to 134 (IICF…LVIL), 154 to 174 (ILLL…ELMV), and 189 to 209 (IISG…KYWI).

Belongs to the CemA family.

Its subcellular location is the plastid. The protein localises to the chloroplast inner membrane. The catalysed reaction is K(+)(in) + H(+)(out) = K(+)(out) + H(+)(in). Contributes to K(+)/H(+) antiport activity by supporting proton efflux to control proton extrusion and homeostasis in chloroplasts in a light-dependent manner to modulate photosynthesis. Prevents excessive induction of non-photochemical quenching (NPQ) under continuous-light conditions. Indirectly promotes efficient inorganic carbon uptake into chloroplasts. This chain is Potassium/proton antiporter CemA, found in Coffea arabica (Arabian coffee).